A 480-amino-acid polypeptide reads, in one-letter code: Salicylate hydroxylase asL1 (480 aa).

The helical transmembrane segment at 17 to 37 (PMEIAIVGGGIVGVILAIGLT) threads the bilayer. FAD is bound by residues Glu47 and Ala60. N-linked (GlcNAc...) asparagine glycosylation is present at Asn87. Arg131 is an FAD binding site. A glycan (N-linked (GlcNAc...) asparagine) is linked at Asn168. Residues Arg213 and Tyr246 contribute to the active site. Residue Asn250 is glycosylated (N-linked (GlcNAc...) asparagine). FAD contacts are provided by Asp329 and Ala342. Asn400 and Asn464 each carry an N-linked (GlcNAc...) asparagine glycan.

Belongs to the paxM FAD-dependent monooxygenase family. FAD serves as cofactor.

The protein localises to the membrane. It participates in secondary metabolite biosynthesis; terpenoid biosynthesis. In terms of biological role, salicylate hydroxylase; part of the gene cluster that mediates the biosynthesis of xenovulene A, an unusual meroterpenoid that has potent inhibitory effects on the human gamma-aminobutyrate A (GABAA) benzodiazepine receptor. The first step of xenovulene A biosynthesis is the biosynthesis of 3-methylorcinaldehyde performed by the non-reducing polyketide synthase aspks1. The salicylate hydroxylase asL1 then catalyzes the oxidative dearomatization of 3-methylorcinaldehyde to yield a dearomatized hydroxycyclohexadione. The 2-oxoglutarate-dependent dioxygenase asL3 further catalyzes the oxidative ring expansion to provide the first tropolone metabolite. The cytochrome P450 monooxygenase asR2 allows the synthesis of tropolone hemiacetal. In parallel, a previously unrecognised class of terpene cyclase, asR6, produces alpha-humulene from farnesylpyrophosphate (FPP). The putative Diels-Alderase asR5 probably catalyzes the formation of the tropolone-humulene skeleton by linking humulene and the polyketide moiety. Oxidative-ring contractions catalyzed by asL4 and asL6 then processively remove carbon atoms from the polyketide to yield xenovulene A. The sequence is that of Salicylate hydroxylase asL1 from Sarocladium schorii (Acremonium strictum (strain IMI 501407)).